A 158-amino-acid polypeptide reads, in one-letter code: C-type lectin lectoxin-Enh4 (158 aa).

An N-terminal signal peptide occupies residues Met1–Gly23. 3 disulfide bridges follow: Cys26/Cys37, Cys54/Cys154, and Cys129/Cys146. A C-type lectin domain is found at Arg33–Gln155. The Mannose-binding signature appears at Glu119–Asn121. Residues Glu127, Asn142, and Asp143 each contribute to the Ca(2+) site.

It belongs to the true venom lectin family. As to expression, expressed by the venom gland.

It localises to the secreted. Mannose-binding lectin which recognizes specific carbohydrate structures and agglutinates a variety of animal cells by binding to cell-surface glycoproteins and glycolipids. May be a calcium-dependent lectin. The polypeptide is C-type lectin lectoxin-Enh4 (Pseudoferania polylepis (Macleay's water snake)).